Here is a 143-residue protein sequence, read N- to C-terminus: D-aminoacyl-tRNA deacylase (143 aa).

The Gly-cisPro motif, important for rejection of L-amino acids motif lies at 135–136 (GP).

This sequence belongs to the DTD family. In terms of assembly, homodimer.

Its subcellular location is the cytoplasm. The enzyme catalyses glycyl-tRNA(Ala) + H2O = tRNA(Ala) + glycine + H(+). It carries out the reaction a D-aminoacyl-tRNA + H2O = a tRNA + a D-alpha-amino acid + H(+). Functionally, an aminoacyl-tRNA editing enzyme that deacylates mischarged D-aminoacyl-tRNAs. Also deacylates mischarged glycyl-tRNA(Ala), protecting cells against glycine mischarging by AlaRS. Acts via tRNA-based rather than protein-based catalysis; rejects L-amino acids rather than detecting D-amino acids in the active site. By recycling D-aminoacyl-tRNA to D-amino acids and free tRNA molecules, this enzyme counteracts the toxicity associated with the formation of D-aminoacyl-tRNA entities in vivo and helps enforce protein L-homochirality. The sequence is that of D-aminoacyl-tRNA deacylase from Mycolicibacterium gilvum (strain PYR-GCK) (Mycobacterium gilvum (strain PYR-GCK)).